The sequence spans 307 residues: Transcription initiation factor IIB 5 (307 aa).

A TFIIB-type zinc finger spans residues 19–47 (TTEPCPECGGPVRTNSAETVCADCGLIID). Residues Cys23, Cys26, Cys39, and Cys42 each coordinate Zn(2+). Composition is skewed to basic and acidic residues over residues 54-66 (GPEW…DTAK) and 107-121 (MRRE…STKE). The segment at 54-121 (GPEWHRDDAD…SRGRWRSTKE (68 aa)) is disordered. 2 tandem repeats follow at residues 129 to 212 (TEIR…NEEL) and 223 to 304 (QFVP…RLLS).

It belongs to the TFIIB family.

Its function is as follows. Stabilizes TBP binding to an archaeal box-A promoter. Also responsible for recruiting RNA polymerase II to the pre-initiation complex (DNA-TBP-TFIIB). This is Transcription initiation factor IIB 5 from Halobacterium salinarum (strain ATCC 700922 / JCM 11081 / NRC-1) (Halobacterium halobium).